The sequence spans 167 residues: Phosphopantetheine adenylyltransferase (167 aa).

Serine 9 serves as a coordination point for substrate. ATP-binding positions include 9–10 and histidine 17; that span reads SF. The substrate site is built by lysine 41, leucine 73, and lysine 87. ATP-binding positions include 88–90, glutamate 98, and 123–129; these read GLR and YSYLSSS.

The protein belongs to the bacterial CoaD family. In terms of assembly, homohexamer. Mg(2+) serves as cofactor.

The protein localises to the cytoplasm. It carries out the reaction (R)-4'-phosphopantetheine + ATP + H(+) = 3'-dephospho-CoA + diphosphate. It participates in cofactor biosynthesis; coenzyme A biosynthesis; CoA from (R)-pantothenate: step 4/5. Reversibly transfers an adenylyl group from ATP to 4'-phosphopantetheine, yielding dephospho-CoA (dPCoA) and pyrophosphate. The chain is Phosphopantetheine adenylyltransferase from Caldicellulosiruptor bescii (strain ATCC BAA-1888 / DSM 6725 / KCTC 15123 / Z-1320) (Anaerocellum thermophilum).